The following is a 138-amino-acid chain: uncharacterized protein (138 aa).

The interval 74-96 (RRRSPSLPARRPPTPREDALEDY) is disordered. Residues 87 to 96 (TPREDALEDY) show a composition bias toward basic and acidic residues.

This is an uncharacterized protein from Orgyia pseudotsugata (Douglas-fir tussock moth).